The primary structure comprises 327 residues: GMP reductase (327 aa).

C176 acts as the Thioimidate intermediate in catalysis. 205-228 is a binding site for NADP(+); the sequence is IIADGGIRTHGDIAKSIRFGATMV.

It belongs to the IMPDH/GMPR family. GuaC type 2 subfamily.

It catalyses the reaction IMP + NH4(+) + NADP(+) = GMP + NADPH + 2 H(+). Functionally, catalyzes the irreversible NADPH-dependent deamination of GMP to IMP. It functions in the conversion of nucleobase, nucleoside and nucleotide derivatives of G to A nucleotides, and in maintaining the intracellular balance of A and G nucleotides. The protein is GMP reductase of Streptococcus equi subsp. zooepidemicus (strain H70).